Consider the following 327-residue polypeptide: Pectate lyase A (327 aa).

Residues 1–19 (MQNLKFLIAAVSCLGPALA) form the signal peptide. N-linked (GlcNAc...) asparagine glycosylation occurs at N99. Positions 140, 169, and 173 each coordinate Ca(2+). R226 is a catalytic residue.

The protein belongs to the polysaccharide lyase 1 family. Ca(2+) is required as a cofactor.

It localises to the secreted. The catalysed reaction is Eliminative cleavage of (1-&gt;4)-alpha-D-galacturonan to give oligosaccharides with 4-deoxy-alpha-D-galact-4-enuronosyl groups at their non-reducing ends.. Pectinolytic enzyme consist of four classes of enzymes: pectin lyase, polygalacturonase, pectin methylesterase and rhamnogalacturonase. Among pectinolytic enzymes, pectin lyase is the most important in depolymerization of pectin, since it cleaves internal glycosidic bonds of highly methylated pectins. Favors pectate, the anion, over pectin, the methyl ester. The polypeptide is Pectate lyase A (plyA) (Emericella nidulans (strain FGSC A4 / ATCC 38163 / CBS 112.46 / NRRL 194 / M139) (Aspergillus nidulans)).